We begin with the raw amino-acid sequence, 93 residues long: uncharacterized protein (93 aa).

Residues 12 to 32 (VVGGLSFWTFSAGLIMIVNAL) form a helical membrane-spanning segment. Residues 47-66 (TANANGSDDDNENKNNSYRS) are disordered.

It is found in the cell membrane. This is an uncharacterized protein from Mycoplasma genitalium (strain ATCC 33530 / DSM 19775 / NCTC 10195 / G37) (Mycoplasmoides genitalium).